The sequence spans 289 residues: Mas-related G-protein coupled receptor member G (289 aa).

Residues 1-13 (MFGLFGLWRTFDS) are Extracellular-facing. The chain crosses the membrane as a helical span at residues 14–34 (VVFYLTLIVGLGGPVGNGLVL). Residues 35–42 (WNLGFRIK) lie on the Cytoplasmic side of the membrane. Residues 43 to 63 (KGPFSIYLLHLAAADFLFLSC) form a helical membrane-spanning segment. The Extracellular segment spans residues 64 to 78 (RVGFSVAQAALGAQD). Residues 79 to 99 (TLYFVLTFLWFAVGLWLLAAF) form a helical membrane-spanning segment. The Cytoplasmic segment spans residues 100–120 (SVERCLSDLFPACYQGCRPRH). A helical membrane pass occupies residues 121–141 (ASAVLCALVWTPTLPAVPLPA). Residues 142–163 (NACGLLRNSACPLVCPRYHVAS) lie on the Extracellular side of the membrane. A helical transmembrane segment spans residues 164–184 (VTWFLVLARVAWTAGVVLFVW). Residues 185–195 (VTCCSTRPRPR) lie on the Cytoplasmic side of the membrane. A helical transmembrane segment spans residues 196–216 (LYGIVLGALLLLFFCGLPSVF). At 217 to 221 (YWSLQ) the chain is on the extracellular side. A helical membrane pass occupies residues 222–242 (PLLNFLLPVFSPLATLLACVN). Residues 243–289 (SSSKPLIYSGLGRQPGKREPLRSVLRRALGEGAELGARGQSLPMGLL) lie on the Cytoplasmic side of the membrane.

It belongs to the G-protein coupled receptor 1 family. Mas subfamily.

It localises to the cell membrane. Its function is as follows. Orphan receptor. May regulate nociceptor function and/or development, including the sensation or modulation of pain. The chain is Mas-related G-protein coupled receptor member G (MRGPRG) from Homo sapiens (Human).